A 301-amino-acid chain; its full sequence is Small ribosomal subunit biogenesis GTPase RsgA (301 aa).

A CP-type G domain is found at 65-224 (YNQLIRPKVA…LVDTPGFGNL (160 aa)). GTP contacts are provided by residues 115-118 (SKYD) and 167-175 (GNSGVGKST). Zn(2+) is bound by residues cysteine 247, cysteine 252, histidine 254, and cysteine 260.

The protein belongs to the TRAFAC class YlqF/YawG GTPase family. RsgA subfamily. Monomer. Associates with 30S ribosomal subunit, binds 16S rRNA. Zn(2+) is required as a cofactor.

Its subcellular location is the cytoplasm. One of several proteins that assist in the late maturation steps of the functional core of the 30S ribosomal subunit. Helps release RbfA from mature subunits. May play a role in the assembly of ribosomal proteins into the subunit. Circularly permuted GTPase that catalyzes slow GTP hydrolysis, GTPase activity is stimulated by the 30S ribosomal subunit. The sequence is that of Small ribosomal subunit biogenesis GTPase RsgA from Ureaplasma urealyticum serovar 10 (strain ATCC 33699 / Western).